A 199-amino-acid chain; its full sequence is Transgelin-3 (199 aa).

The 113-residue stretch at 24–136 (ADLENKLVDW…RTLMALGSVA (113 aa)) folds into the Calponin-homology (CH) domain. A Phosphoserine modification is found at Ser-163. The stretch at 174–199 (IGLQMGSNKGASQAGMTGYGMPRQIM) is one Calponin-like repeat. The segment covering 178–188 (MGSNKGASQAG) has biased composition (polar residues). Positions 178 to 199 (MGSNKGASQAGMTGYGMPRQIM) are disordered.

It belongs to the calponin family.

The protein is Transgelin-3 (Tagln3) of Mus musculus (Mouse).